The following is a 330-amino-acid chain: NADH-quinone oxidoreductase subunit H (330 aa).

Helical transmembrane passes span 11–31, 81–101, 114–134, 154–174, 187–207, 238–258, 270–290, and 309–329; these read ILVA…CGAL, FIFV…FAII, IGIL…LFAG, ISYE…VGSF, LWFI…GVAV, FFVG…TLFF, QIPF…FILL, and FCLP…LAAA.

This sequence belongs to the complex I subunit 1 family. In terms of assembly, NDH-1 is composed of 13 different subunits. Subunits NuoA, H, J, K, L, M, N constitute the membrane sector of the complex.

It is found in the cell inner membrane. The enzyme catalyses a quinone + NADH + 5 H(+)(in) = a quinol + NAD(+) + 4 H(+)(out). Its function is as follows. NDH-1 shuttles electrons from NADH, via FMN and iron-sulfur (Fe-S) centers, to quinones in the respiratory chain. The immediate electron acceptor for the enzyme in this species is believed to be ubiquinone. Couples the redox reaction to proton translocation (for every two electrons transferred, four hydrogen ions are translocated across the cytoplasmic membrane), and thus conserves the redox energy in a proton gradient. This subunit may bind ubiquinone. This chain is NADH-quinone oxidoreductase subunit H, found in Ectopseudomonas mendocina (strain ymp) (Pseudomonas mendocina).